The primary structure comprises 139 residues: Small ribosomal subunit protein uS12 (139 aa).

3-methylthioaspartic acid is present on aspartate 102.

This sequence belongs to the universal ribosomal protein uS12 family. In terms of assembly, part of the 30S ribosomal subunit. Contacts proteins S8 and S17. May interact with IF1 in the 30S initiation complex.

With S4 and S5 plays an important role in translational accuracy. Functionally, interacts with and stabilizes bases of the 16S rRNA that are involved in tRNA selection in the A site and with the mRNA backbone. Located at the interface of the 30S and 50S subunits, it traverses the body of the 30S subunit contacting proteins on the other side and probably holding the rRNA structure together. The combined cluster of proteins S8, S12 and S17 appears to hold together the shoulder and platform of the 30S subunit. The protein is Small ribosomal subunit protein uS12 of Phytoplasma australiense.